A 390-amino-acid polypeptide reads, in one-letter code: Alanine racemase (390 aa).

Lys-46 serves as the catalytic Proton acceptor; specific for D-alanine. Lys-46 carries the N6-(pyridoxal phosphate)lysine modification. Arg-144 is a binding site for substrate. Tyr-275 serves as the catalytic Proton acceptor; specific for L-alanine. Residue Met-323 coordinates substrate.

Belongs to the alanine racemase family. The cofactor is pyridoxal 5'-phosphate.

It catalyses the reaction L-alanine = D-alanine. It functions in the pathway amino-acid biosynthesis; D-alanine biosynthesis; D-alanine from L-alanine: step 1/1. Functionally, catalyzes the interconversion of L-alanine and D-alanine. May also act on other amino acids. This is Alanine racemase (alr) from Mycolicibacterium vanbaalenii (strain DSM 7251 / JCM 13017 / BCRC 16820 / KCTC 9966 / NRRL B-24157 / PYR-1) (Mycobacterium vanbaalenii).